The primary structure comprises 105 residues: Prothymosin alpha-A (105 aa).

Basic and acidic residues predominate over residues 1–30; the sequence is MADTKVDTSKEVSAKDLKEKKQVEEAENGK. Residues 1–105 are disordered; the sequence is MADTKVDTSK…VDPKKQKTDV (105 aa). Acidic residues-rich tracts occupy residues 39–78 and 87–96; these read ENEE…EEAE and EDDDDDEDDV.

This sequence belongs to the pro/parathymosin family. As to expression, at the 20-somite stage (18 hpf), expressed on the dorsal side of the embryo in the developing central and peripheral nervous system (CNS and PNS), in the tail bud and the pronephric ducts. In the PNS, expressed in the otic vesicle, trigeminal ganglion and the anterior lateral line placode. Localized throughout the hindbrain, with highest expression in rhombomeres 3 and 4. In the head, expressed in the olfactory placode and in the diencephalic region. At the end of the segmentation period (20 hpf), expression begins in the newly forming endodermal pouches, and weakly in the pharyngeal arch precursor cells. During the early pharyngula period, expressed in the pectoral fin bud, the developing retina, and still present in the central nervous system and endodermal pouches. In the tail, expressed in the spinal cord and posterior lateral line precursors. Weakly expressed in the pronephric ducts, only in the corpuscles of Stanius. At 48 hpf, still expressed in the retina and brain, where expression is almost uniform. At this stage, expression is decreased in the spinal cord and is absent from the lateral line cells and pronephric ducts, but appears in the intestine and continues in the pharyngeal arches. In 72 hpf embryos, expression in the brain remains uniform but is restricted to amacrine cells in the retina. In the pharyngeal arches, expression continues to be limited to the ectodermal and endodermal covering cells.

The protein localises to the nucleus. This chain is Prothymosin alpha-A (ptmaa), found in Danio rerio (Zebrafish).